The primary structure comprises 426 residues: 3-phosphoshikimate 1-carboxyvinyltransferase (426 aa).

Positions 20, 21, and 25 each coordinate 3-phosphoshikimate. Lys20 is a binding site for phosphoenolpyruvate. Positions 92 and 120 each coordinate phosphoenolpyruvate. Residues Ser165, Gln167, Asp313, and Lys340 each coordinate 3-phosphoshikimate. A phosphoenolpyruvate-binding site is contributed by Gln167. Residue Asp313 is the Proton acceptor of the active site. Phosphoenolpyruvate contacts are provided by Arg344 and Arg386.

Belongs to the EPSP synthase family. In terms of assembly, monomer.

The protein localises to the cytoplasm. It carries out the reaction 3-phosphoshikimate + phosphoenolpyruvate = 5-O-(1-carboxyvinyl)-3-phosphoshikimate + phosphate. It participates in metabolic intermediate biosynthesis; chorismate biosynthesis; chorismate from D-erythrose 4-phosphate and phosphoenolpyruvate: step 6/7. Functionally, catalyzes the transfer of the enolpyruvyl moiety of phosphoenolpyruvate (PEP) to the 5-hydroxyl of shikimate-3-phosphate (S3P) to produce enolpyruvyl shikimate-3-phosphate and inorganic phosphate. The sequence is that of 3-phosphoshikimate 1-carboxyvinyltransferase from Brevibacillus brevis (strain 47 / JCM 6285 / NBRC 100599).